The chain runs to 316 residues: Myb-related protein 306 (316 aa).

HTH myb-type domains are found at residues 9–65 and 66–116; these read KIGV…RPGI and KRGD…KKKL. DNA-binding regions (H-T-H motif) lie at residues 37–61 and 89–112; these read WRAI…TNYL and WAAI…NTHL. Disordered regions lie at residues 119–144, 168–193, and 209–230; these read LQSP…SKGQ, KTSS…QAST, and KKSP…TTTS. A compositionally biased stretch (basic and acidic residues) spans 135–144; sequence DSDKSVSKGQ. Over residues 181 to 193 the composition is skewed to polar residues; sequence VQTTQPRPFQAST. Residues 216 to 230 are compositionally biased toward low complexity; sequence SSTSQAGSSESTTTS.

Expressed in flowers, leaves and weakly in seed pods.

The protein resides in the nucleus. Transcription factor. This chain is Myb-related protein 306, found in Antirrhinum majus (Garden snapdragon).